Consider the following 315-residue polypeptide: Tetratricopeptide repeat protein 23-like (315 aa).

The segment at 28-56 is disordered; the sequence is KIPEHQRTDESSPTSGSEESEEDTKAKEK. 3 coiled-coil regions span residues 65–90, 179–200, and 250–280; these read REKL…ANKE, REAY…ESYK, and SELV…HQAH.

Its subcellular location is the cytoplasm. The protein resides in the cytoskeleton. The protein localises to the microtubule organizing center. It localises to the centrosome. It is found in the spindle. Its subcellular location is the midbody. The polypeptide is Tetratricopeptide repeat protein 23-like (TTC23L) (Bos taurus (Bovine)).